Here is a 282-residue protein sequence, read N- to C-terminus: Undecaprenyl-diphosphatase (282 aa).

8 helical membrane-spanning segments follow: residues 1–21, 40–60, 89–109, 112–132, 153–173, 196–216, 228–248, and 258–278; these read MNLFQAIILGIIQGLTEFLPI, GAAFTAIIQIGTLAAVLIYFA, WMIAVGTIPIVVFGLTFKHEI, VLRSLYIVSASMIGLALVLVV, LSWTDAIIIGLAQAMALIPGS, FSFLLSLPSVFAAGMLELYQT, LNLAVATIAAFIFGYLSIAFL, and GIFIAYRLILGIGLIVMIGTG.

This sequence belongs to the UppP family.

Its subcellular location is the cell inner membrane. It catalyses the reaction di-trans,octa-cis-undecaprenyl diphosphate + H2O = di-trans,octa-cis-undecaprenyl phosphate + phosphate + H(+). Functionally, catalyzes the dephosphorylation of undecaprenyl diphosphate (UPP). Confers resistance to bacitracin. The sequence is that of Undecaprenyl-diphosphatase from Chlorobaculum tepidum (strain ATCC 49652 / DSM 12025 / NBRC 103806 / TLS) (Chlorobium tepidum).